The sequence spans 259 residues: MLMVISPAKTLDFETPPTTARFTRPQYLDHSQELITQLRELTPAQISELMHLSDKLAGLNAARFGSWDPAFTLDNAKQALLAFKGDVYTGLQAETLSDAQLDYAQDHLRMLSGLYGLLRPLDLMQPYRLEMGTRLANARGKDLYAFWGTRISEWLNEALADQGDDLLLNLASTEYFSAVKRSALKARIIDTEFKDLKNGHYKIISFYAKKARGMMSRFVIEERINSPEALKQFDVQGYRYNSEQSTPDKLVFLRNSAED.

This sequence belongs to the UPF0246 family.

The chain is UPF0246 protein PSPTO_1244 from Pseudomonas syringae pv. tomato (strain ATCC BAA-871 / DC3000).